Reading from the N-terminus, the 117-residue chain is uncharacterized protein (117 aa).

Residues 57-77 traverse the membrane as a helical segment; that stretch reads LGFPLGLLVFLHSLIVARFFV.

Its subcellular location is the membrane. This is an uncharacterized protein from Schizosaccharomyces pombe (strain 972 / ATCC 24843) (Fission yeast).